The chain runs to 752 residues: Endo-1,4-beta-xylanase 3 (752 aa).

The segment at 1–22 (MEKNTNTNHTSDDNNDKNHTNE) is disordered. A compositionally biased stretch (basic and acidic residues) spans 10 to 22 (TSDDNNDKNHTNE). CBM-cenC domains are found at residues 26 to 163 (KIIL…EGPP) and 197 to 344 (NIVE…VQGP). The GH10 domain occupies 397–692 (FPYIVKVKQT…NEAGKRFLEV (296 aa)). E526 serves as the catalytic Proton donor. Residue E627 is the Nucleophile of the active site.

The protein belongs to the glycosyl hydrolase 10 (cellulase F) family. As to expression, confined to immature xylems.

The enzyme catalyses Endohydrolysis of (1-&gt;4)-beta-D-xylosidic linkages in xylans.. It participates in glycan degradation; xylan degradation. Binds to and hydrolyzes insoluble and soluble xylan substrates. This is Endo-1,4-beta-xylanase 3 from Arabidopsis thaliana (Mouse-ear cress).